Consider the following 186-residue polypeptide: Peptide deformylase 2 (186 aa).

Residues C104 and H146 each contribute to the Fe cation site. E147 is an active-site residue. H150 contacts Fe cation.

This sequence belongs to the polypeptide deformylase family. It depends on Fe(2+) as a cofactor.

It catalyses the reaction N-terminal N-formyl-L-methionyl-[peptide] + H2O = N-terminal L-methionyl-[peptide] + formate. Functionally, removes the formyl group from the N-terminal Met of newly synthesized proteins. Requires at least a dipeptide for an efficient rate of reaction. N-terminal L-methionine is a prerequisite for activity but the enzyme has broad specificity at other positions. This is Peptide deformylase 2 from Streptomyces avermitilis (strain ATCC 31267 / DSM 46492 / JCM 5070 / NBRC 14893 / NCIMB 12804 / NRRL 8165 / MA-4680).